The chain runs to 76 residues: Large ribosomal subunit protein uL29 (76 aa).

It belongs to the universal ribosomal protein uL29 family.

This Gloeothece citriformis (strain PCC 7424) (Cyanothece sp. (strain PCC 7424)) protein is Large ribosomal subunit protein uL29.